The primary structure comprises 142 residues: 3-hydroxyacyl-[acyl-carrier-protein] dehydratase FabZ (142 aa).

His-46 is an active-site residue.

Belongs to the thioester dehydratase family. FabZ subfamily.

The protein localises to the cytoplasm. It carries out the reaction a (3R)-hydroxyacyl-[ACP] = a (2E)-enoyl-[ACP] + H2O. In terms of biological role, involved in unsaturated fatty acids biosynthesis. Catalyzes the dehydration of short chain beta-hydroxyacyl-ACPs and long chain saturated and unsaturated beta-hydroxyacyl-ACPs. This chain is 3-hydroxyacyl-[acyl-carrier-protein] dehydratase FabZ, found in Thermus thermophilus (strain ATCC BAA-163 / DSM 7039 / HB27).